Consider the following 339-residue polypeptide: Undecaprenyl-phosphate 4-deoxy-4-formamido-L-arabinose transferase (339 aa).

A run of 2 helical transmembrane segments spans residues 235-255 (LSLV…FLLV) and 269-289 (LFVL…GMGL).

This sequence belongs to the glycosyltransferase 2 family.

The protein localises to the cell inner membrane. The enzyme catalyses UDP-4-deoxy-4-formamido-beta-L-arabinose + di-trans,octa-cis-undecaprenyl phosphate = 4-deoxy-4-formamido-alpha-L-arabinopyranosyl di-trans,octa-cis-undecaprenyl phosphate + UDP. The protein operates within glycolipid biosynthesis; 4-amino-4-deoxy-alpha-L-arabinose undecaprenyl phosphate biosynthesis; 4-amino-4-deoxy-alpha-L-arabinose undecaprenyl phosphate from UDP-4-deoxy-4-formamido-beta-L-arabinose and undecaprenyl phosphate: step 1/2. It participates in bacterial outer membrane biogenesis; lipopolysaccharide biosynthesis. Catalyzes the transfer of 4-deoxy-4-formamido-L-arabinose from UDP to undecaprenyl phosphate. The modified arabinose is attached to lipid A and is required for resistance to polymyxin and cationic antimicrobial peptides. The protein is Undecaprenyl-phosphate 4-deoxy-4-formamido-L-arabinose transferase of Pseudomonas aeruginosa (strain LESB58).